Here is a 370-residue protein sequence, read N- to C-terminus: Probable G-protein coupled receptor 85 (370 aa).

Topologically, residues 1–25 (MANYSHAADNILQNLSPLTAFLKLT) are extracellular. The N-linked (GlcNAc...) asparagine glycan is linked to asparagine 3. Residues 26-46 (SLGFIIGVSVVGNLLISILLA) form a helical membrane-spanning segment. Over 47-57 (KDKTLHRAPYY) the chain is Cytoplasmic. Residues 58–78 (FLLDLCCSDILRSAICFPFVF) form a helical membrane-spanning segment. The Extracellular segment spans residues 79 to 96 (NSVKNGSTWTYGTLTCKV). An N-linked (GlcNAc...) asparagine glycan is attached at asparagine 83. An intrachain disulfide couples cysteine 94 to cysteine 172. Residues 97-117 (IAFLGVLSCFHTAFMLFCISV) form a helical membrane-spanning segment. Residues 118–137 (TRYLAIAHHRFYTKRLTFWT) lie on the Cytoplasmic side of the membrane. Residues 138-158 (CLAVICMVWTLSVAMAFPPVL) form a helical membrane-spanning segment. At 159–188 (DVGTYSFIREEDQCTFQHRSFRANDSLGFM) the chain is on the extracellular side. Residue asparagine 182 is glycosylated (N-linked (GlcNAc...) asparagine). Residues 189-209 (LLLALILLATQLVYLKLIFFV) form a helical membrane-spanning segment. The Cytoplasmic segment spans residues 210-286 (HDRRKMKPVQ…FKMEKRISRM (77 aa)). Residues 287 to 307 (FYIMTFLFLTLWGPYLVACYW) traverse the membrane as a helical segment. The Extracellular segment spans residues 308–313 (RVFARG). The chain crosses the membrane as a helical span at residues 314-334 (PVVPGGFLTAAVWMSFAQAGI). Residues 335–370 (NPFVCIFSNRELRRCFSTTLLYCRKSRLPREPYCVI) are Cytoplasmic-facing.

Belongs to the G-protein coupled receptor 1 family. Interacts with DLG4 and DLG3.

Its subcellular location is the cell membrane. The protein localises to the endoplasmic reticulum. Its function is as follows. Orphan receptor. The chain is Probable G-protein coupled receptor 85 (GPR85) from Pongo abelii (Sumatran orangutan).